The following is a 292-amino-acid chain: tRNA (guanine-N(1)-)-methyltransferase (292 aa).

Residues Gly-151 and 175-180 (IGDYVL) each bind S-adenosyl-L-methionine.

It belongs to the RNA methyltransferase TrmD family. As to quaternary structure, homodimer.

Its subcellular location is the cytoplasm. The catalysed reaction is guanosine(37) in tRNA + S-adenosyl-L-methionine = N(1)-methylguanosine(37) in tRNA + S-adenosyl-L-homocysteine + H(+). Its function is as follows. Specifically methylates guanosine-37 in various tRNAs. This chain is tRNA (guanine-N(1)-)-methyltransferase, found in Corynebacterium diphtheriae (strain ATCC 700971 / NCTC 13129 / Biotype gravis).